Consider the following 528-residue polypeptide: Homoserine O-acetyltransferase (528 aa).

The 186-residue stretch at 60–245 (LVICHALTGS…AALLTYRSRD (186 aa)) folds into the AB hydrolase-1 domain. Catalysis depends on Ser-154, which acts as the Nucleophile. Disordered stretches follow at residues 250-335 (RFGR…VKTQ) and 388-413 (DLSA…DATE). The span at 273–282 (QETTDPSVPS) shows a compositional bias: polar residues. Over residues 295-304 (AWREHNDGHR) the composition is skewed to basic and acidic residues. Low complexity predominate over residues 389–409 (LSAPSRDTSLSSLSSGLPSSP). Residues Asp-438 and His-467 contribute to the active site.

The protein belongs to the AB hydrolase superfamily. MetX family.

It localises to the cytoplasm. It catalyses the reaction L-homoserine + acetyl-CoA = O-acetyl-L-homoserine + CoA. It functions in the pathway amino-acid biosynthesis; L-methionine biosynthesis via de novo pathway; O-acetyl-L-homoserine from L-homoserine: step 1/1. Inhibited by 6-carbamoyl-3a,4,5,9b-tetrahydro-3H-cyclopenta[ c]quinoline-4-carboxylic acid (CTCQC). In terms of biological role, commits homoserine to the methionine biosynthesis pathway by catalyzing its O-acetylation. In Cryptococcus neoformans var. grubii serotype A (strain H99 / ATCC 208821 / CBS 10515 / FGSC 9487) (Filobasidiella neoformans var. grubii), this protein is Homoserine O-acetyltransferase.